We begin with the raw amino-acid sequence, 225 residues long: MSLQPTATEVGTMYDQYTSLLTDVMAGFIHVGYWDDPEREDTIEVATERLTREIGERLSSVRGQRILDVGCGTGKSAVQIATAHDVHITGITVSNHQIELAQSQYESNTKAGQVNFLFANAMDLPFADASFDGAYAIESLVHMDDRRTALTNIARVLRPGSRLAIADLFLDAGCPNPEVLARFHELFQVPPMPSGDDLKALLHQTGFKVIEFTDIRDTSGLSANF.

2 residues coordinate S-adenosyl-L-methionine: Gln97 and His142.

Belongs to the methyltransferase superfamily.

It catalyses the reaction desmethylrestrictinol + S-adenosyl-L-methionine = restrictinol + S-adenosyl-L-homocysteine + H(+). It functions in the pathway antifungal biosynthesis. Its function is as follows. O-methyltransferase; part of the gene cluster that mediates the biosynthesis of the tetrahydropyranyl antifungal agent restricticin that acts as an inhibitor of CYP51 and blocks the ergosterol biosynthesis. Within the pathway, rstn1 uses S-adenosylmethionine to methylate position C4 of desmethylrestrictinol to produce restrictinol. The highly reducing polyketide synthase rstn3, the short chain dehydrogenase rstn4, the cyclase rstn5, the FAD-dependent monooxygenase rstn6 and the enoylreductase rstn7 are required to generate the first stable intermediate desmethylrestrictinol. Rstn3 with rstn7 biosynthesize the first polyketide chain intermediate that is reduced by rstn4, followed by epoxidation by rstn6 before 6-endo cyclization via epoxide opening by rstn5 leads to desmethylrestrictinol. The methyltransferase rstn1 then catalyzes the C4 O-methylation of desmethylrestrictinol to produce restrictinol, and the nonribosomal peptide synthetase rstn8 catalyzes the C3 esterification of restrictinol with glycine that leads to restricticin. This chain is O-methyltransferase rstn1, found in Aspergillus nomiae NRRL (strain ATCC 15546 / NRRL 13137 / CBS 260.88 / M93).